The primary structure comprises 128 residues: MSRKESRMQAFQTLFQLEMKDTELTINEAINFIKDDEPELDFDFIHWLVTGVKDHEPVLDDTIKPHLKDWSLQRLLKTDRIILRMATFELLHSDTPPKVIINEAVELAKQFSDDEHYKFINGVLSNIK.

Belongs to the NusB family.

Involved in transcription antitermination. Required for transcription of ribosomal RNA (rRNA) genes. Binds specifically to the boxA antiterminator sequence of the ribosomal RNA (rrn) operons. The polypeptide is Transcription antitermination protein NusB (Staphylococcus haemolyticus (strain JCSC1435)).